The chain runs to 437 residues: Aminopeptidase G (437 aa).

Active-site residues include C70, H361, and N382.

Belongs to the peptidase C1 family.

It localises to the cytoplasm. The sequence is that of Aminopeptidase G (pepG) from Lactobacillus delbrueckii subsp. lactis.